The following is a 156-amino-acid chain: Transcription elongation factor GreA (156 aa).

The stretch at 1-32 (MKKVRLTREGYEKLKKELEDLKRKFMYEISER) forms a coiled coil.

Belongs to the GreA/GreB family.

Its function is as follows. Necessary for efficient RNA polymerase transcription elongation past template-encoded arresting sites. The arresting sites in DNA have the property of trapping a certain fraction of elongating RNA polymerases that pass through, resulting in locked ternary complexes. Cleavage of the nascent transcript by cleavage factors such as GreA or GreB allows the resumption of elongation from the new 3'terminus. GreA releases sequences of 2 to 3 nucleotides. This Thermotoga sp. (strain RQ2) protein is Transcription elongation factor GreA.